A 320-amino-acid polypeptide reads, in one-letter code: Beta-ketoacyl-[acyl-carrier-protein] synthase III (320 aa).

Catalysis depends on residues Cys-114 and His-247. Residues 248–252 (QANRR) form an ACP-binding region. Asn-277 is an active-site residue.

The protein belongs to the thiolase-like superfamily. FabH family. Homodimer.

The protein localises to the cytoplasm. The catalysed reaction is malonyl-[ACP] + acetyl-CoA + H(+) = 3-oxobutanoyl-[ACP] + CO2 + CoA. The protein operates within lipid metabolism; fatty acid biosynthesis. Catalyzes the condensation reaction of fatty acid synthesis by the addition to an acyl acceptor of two carbons from malonyl-ACP. Catalyzes the first condensation reaction which initiates fatty acid synthesis and may therefore play a role in governing the total rate of fatty acid production. Possesses both acetoacetyl-ACP synthase and acetyl transacylase activities. Its substrate specificity determines the biosynthesis of branched-chain and/or straight-chain of fatty acids. The protein is Beta-ketoacyl-[acyl-carrier-protein] synthase III of Neisseria gonorrhoeae (strain ATCC 700825 / FA 1090).